Here is a 405-residue protein sequence, read N- to C-terminus: Nicotinate phosphoribosyltransferase (405 aa).

The residue at position 230 (His-230) is a Phosphohistidine; by autocatalysis.

The protein belongs to the NAPRTase family. In terms of processing, transiently phosphorylated on a His residue during the reaction cycle. Phosphorylation strongly increases the affinity for substrates and increases the rate of nicotinate D-ribonucleotide production. Dephosphorylation regenerates the low-affinity form of the enzyme, leading to product release.

It catalyses the reaction nicotinate + 5-phospho-alpha-D-ribose 1-diphosphate + ATP + H2O = nicotinate beta-D-ribonucleotide + ADP + phosphate + diphosphate. Its pathway is cofactor biosynthesis; NAD(+) biosynthesis; nicotinate D-ribonucleotide from nicotinate: step 1/1. Functionally, catalyzes the synthesis of beta-nicotinate D-ribonucleotide from nicotinate and 5-phospho-D-ribose 1-phosphate at the expense of ATP. The polypeptide is Nicotinate phosphoribosyltransferase (Bordetella pertussis (strain Tohama I / ATCC BAA-589 / NCTC 13251)).